We begin with the raw amino-acid sequence, 478 residues long: Protein nucleotidyltransferase YdiU (478 aa).

Residues Gly84, Gly86, Arg87, Lys107, Asp119, Gly120, Arg170, and Arg177 each contribute to the ATP site. Catalysis depends on Asp246, which acts as the Proton acceptor. Mg(2+) contacts are provided by Asn247 and Asp256. Asp256 is an ATP binding site.

This sequence belongs to the SELO family. Requires Mg(2+) as cofactor. Mn(2+) is required as a cofactor.

It carries out the reaction L-seryl-[protein] + ATP = 3-O-(5'-adenylyl)-L-seryl-[protein] + diphosphate. The catalysed reaction is L-threonyl-[protein] + ATP = 3-O-(5'-adenylyl)-L-threonyl-[protein] + diphosphate. It catalyses the reaction L-tyrosyl-[protein] + ATP = O-(5'-adenylyl)-L-tyrosyl-[protein] + diphosphate. The enzyme catalyses L-histidyl-[protein] + UTP = N(tele)-(5'-uridylyl)-L-histidyl-[protein] + diphosphate. It carries out the reaction L-seryl-[protein] + UTP = O-(5'-uridylyl)-L-seryl-[protein] + diphosphate. The catalysed reaction is L-tyrosyl-[protein] + UTP = O-(5'-uridylyl)-L-tyrosyl-[protein] + diphosphate. In terms of biological role, nucleotidyltransferase involved in the post-translational modification of proteins. It can catalyze the addition of adenosine monophosphate (AMP) or uridine monophosphate (UMP) to a protein, resulting in modifications known as AMPylation and UMPylation. This Escherichia coli O17:K52:H18 (strain UMN026 / ExPEC) protein is Protein nucleotidyltransferase YdiU.